A 264-amino-acid chain; its full sequence is Ribosomal RNA small subunit methyltransferase J (264 aa).

Residues 111 to 112 (RD), 127 to 128 (ER), and Asp-180 contribute to the S-adenosyl-L-methionine site.

Belongs to the methyltransferase superfamily. RsmJ family.

Its subcellular location is the cytoplasm. The catalysed reaction is guanosine(1516) in 16S rRNA + S-adenosyl-L-methionine = N(2)-methylguanosine(1516) in 16S rRNA + S-adenosyl-L-homocysteine + H(+). Specifically methylates the guanosine in position 1516 of 16S rRNA. This chain is Ribosomal RNA small subunit methyltransferase J, found in Alkalilimnicola ehrlichii (strain ATCC BAA-1101 / DSM 17681 / MLHE-1).